We begin with the raw amino-acid sequence, 425 residues long: uncharacterized protein (425 aa).

12 helical membrane passes run Leu-15–Leu-35, Leu-48–Leu-68, Met-84–Leu-104, Leu-107–Val-127, Ile-149–Ile-169, Thr-174–Ala-194, Val-225–Ala-245, Ala-271–Ile-291, Leu-295–Phe-315, Val-331–Met-351, Leu-370–Gly-390, and Phe-395–Leu-415.

This sequence to E.coli AmpG and yeast YBR220c.

The protein localises to the cell inner membrane. This is an uncharacterized protein from Haemophilus influenzae (strain ATCC 51907 / DSM 11121 / KW20 / Rd).